Here is a 246-residue protein sequence, read N- to C-terminus: Sugar fermentation stimulation protein homolog (246 aa).

The protein belongs to the SfsA family.

The protein is Sugar fermentation stimulation protein homolog of Prochlorococcus marinus (strain MIT 9301).